The primary structure comprises 458 residues: Dihydrolipoyl dehydrogenase (458 aa).

FAD-binding positions include 30–38, K47, and A112; that span reads DKGKLGGTC. The cysteines at positions 38 and 43 are disulfide-linked. NAD(+) is bound by residues 177–181, E200, and 263–266; these read GGGVI and AIGR. Residues D305 and A313 each contribute to the FAD site. H437 functions as the Proton acceptor in the catalytic mechanism.

It belongs to the class-I pyridine nucleotide-disulfide oxidoreductase family. Homodimer. It depends on FAD as a cofactor.

Its subcellular location is the cytoplasm. The catalysed reaction is N(6)-[(R)-dihydrolipoyl]-L-lysyl-[protein] + NAD(+) = N(6)-[(R)-lipoyl]-L-lysyl-[protein] + NADH + H(+). It functions in the pathway ketone degradation; acetoin degradation. The chain is Dihydrolipoyl dehydrogenase (acoL) from Bacillus subtilis (strain 168).